Consider the following 204-residue polypeptide: NADH-quinone oxidoreductase subunit C (204 aa).

The protein belongs to the complex I 30 kDa subunit family. As to quaternary structure, NDH-1 is composed of 14 different subunits. Subunits NuoB, C, D, E, F, and G constitute the peripheral sector of the complex.

The protein resides in the cell inner membrane. It carries out the reaction a quinone + NADH + 5 H(+)(in) = a quinol + NAD(+) + 4 H(+)(out). Functionally, NDH-1 shuttles electrons from NADH, via FMN and iron-sulfur (Fe-S) centers, to quinones in the respiratory chain. The immediate electron acceptor for the enzyme in this species is believed to be ubiquinone. Couples the redox reaction to proton translocation (for every two electrons transferred, four hydrogen ions are translocated across the cytoplasmic membrane), and thus conserves the redox energy in a proton gradient. The sequence is that of NADH-quinone oxidoreductase subunit C from Polaromonas naphthalenivorans (strain CJ2).